A 518-amino-acid chain; its full sequence is Protein FAM98A (518 aa).

2 disordered regions span residues G300–S415 and G434–S518. Positions V302–E311 are enriched in basic and acidic residues. Composition is skewed to gly residues over residues G349–G364, W383–D396, and Q405–S415. A compositionally biased stretch (basic and acidic residues) spans R447–G459. Residues G460–G484 show a composition bias toward gly residues. Low complexity predominate over residues Y488 to Q504. Residues Y505–S518 are compositionally biased toward polar residues.

This sequence belongs to the FAM98 family. As to quaternary structure, interacts (via N- and C-terminus) with DDX1. Interacts (via N- and C-terminus) with C14orf166. Interacts with FAM98B. Interacts with PLEKHM1 (via N- and C-terminus).

In terms of biological role, positively stimulates PRMT1-induced protein arginine methylation. Involved in skeletal homeostasis. Positively regulates lysosome peripheral distribution and ruffled border formation in osteoclasts. This Pongo abelii (Sumatran orangutan) protein is Protein FAM98A.